The chain runs to 350 residues: 3'-hydroxy-N-methyl-(S)-coclaurine 4'-O-methyltransferase (350 aa).

The S-adenosyl-L-methionine site is built by glycine 196, aspartate 219, aspartate 239, methionine 240, and lysine 253. Histidine 257 functions as the Proton acceptor in the catalytic mechanism.

It belongs to the class I-like SAM-binding methyltransferase superfamily. Cation-independent O-methyltransferase family. COMT subfamily. Homodimer.

It catalyses the reaction (S)-3'-hydroxy-N-methylcoclaurine + S-adenosyl-L-methionine = (S)-reticuline + S-adenosyl-L-homocysteine + H(+). Its pathway is alkaloid biosynthesis; (S)-reticuline biosynthesis; (S)-reticuline from (S)-norcoclaurine: step 4/4. Its function is as follows. Catalyzes the transfer of the methyl group to the 4'-hydroxyl group of 3'-hydroxy-N-methylcoclaurine to form reticuline. The polypeptide is 3'-hydroxy-N-methyl-(S)-coclaurine 4'-O-methyltransferase (Coptis japonica (Japanese goldthread)).